The sequence spans 257 residues: Pimeloyl-[acyl-carrier protein] methyl ester esterase (257 aa).

The 227-residue stretch at 16-242 (LVLLHGWGLN…AAHAPFISHP (227 aa)) folds into the AB hydrolase-1 domain. Residues W22, 82–83 (SL), and 143–147 (FLGLQ) each bind substrate. S82 (nucleophile) is an active-site residue. Residues D207 and H235 contribute to the active site. H235 lines the substrate pocket.

Belongs to the AB hydrolase superfamily. Carboxylesterase BioH family. Monomer.

The protein localises to the cytoplasm. The enzyme catalyses 6-carboxyhexanoyl-[ACP] methyl ester + H2O = 6-carboxyhexanoyl-[ACP] + methanol + H(+). It functions in the pathway cofactor biosynthesis; biotin biosynthesis. The physiological role of BioH is to remove the methyl group introduced by BioC when the pimeloyl moiety is complete. It allows to synthesize pimeloyl-ACP via the fatty acid synthetic pathway through the hydrolysis of the ester bonds of pimeloyl-ACP esters. The sequence is that of Pimeloyl-[acyl-carrier protein] methyl ester esterase from Sodalis glossinidius (strain morsitans).